Reading from the N-terminus, the 637-residue chain is Nuclear receptor-binding protein homolog (637 aa).

A compositionally biased stretch (polar residues) spans 1 to 14 (MSNSQANAGISGST). Disordered stretches follow at residues 1–60 (MSNS…TADA) and 74–99 (SEGV…ILEE). The segment covering 36 to 46 (PAATPPSQSTQ) has biased composition (low complexity). Residues 88–98 (DDSEDESEILE) are compositionally biased toward acidic residues. A Protein kinase domain is found at 109 to 375 (REEVDQRDVP…ANDLLFHPLL (267 aa)). 2 disordered regions span residues 465-489 (PNFR…EPVD) and 617-637 (PQEQ…TTSN). Phosphoserine occurs at positions 473, 479, and 482. The residue at position 484 (threonine 484) is a Phosphothreonine.

It belongs to the protein kinase superfamily. Ser/Thr protein kinase family.

Its subcellular location is the cytoplasm. The protein localises to the cell cortex. Functionally, may play a role in subcellular trafficking between the endoplasmic reticulum and Golgi apparatus. This chain is Nuclear receptor-binding protein homolog, found in Drosophila melanogaster (Fruit fly).